The sequence spans 688 residues: Methionine--tRNA ligase (688 aa).

The 'HIGH' region motif lies at 15–25 (PYANGPIHLGH). Zn(2+) is bound by residues cysteine 146, cysteine 149, cysteine 159, and cysteine 162. Positions 332-336 (KMSKS) match the 'KMSKS' region motif. Lysine 335 serves as a coordination point for ATP. The segment at 552–576 (AEAPKKADSKKATDTPVDTRPPLES) is disordered. Basic and acidic residues predominate over residues 554-564 (APKKADSKKAT). Residues 587 to 688 (DFAKIDLRIA…EGAQPGMRVK (102 aa)) form the tRNA-binding domain.

The protein belongs to the class-I aminoacyl-tRNA synthetase family. MetG type 1 subfamily. Homodimer. Zn(2+) is required as a cofactor.

It localises to the cytoplasm. The enzyme catalyses tRNA(Met) + L-methionine + ATP = L-methionyl-tRNA(Met) + AMP + diphosphate. Is required not only for elongation of protein synthesis but also for the initiation of all mRNA translation through initiator tRNA(fMet) aminoacylation. The protein is Methionine--tRNA ligase of Shewanella woodyi (strain ATCC 51908 / MS32).